Consider the following 756-residue polypeptide: Glutathione biosynthesis bifunctional protein GshAB (756 aa).

The tract at residues 1–338 (MNYRELMQKK…TGDIFNEQVA (338 aa)) is glutamate--cysteine ligase. The region spanning 493 to 751 (KKILSAAGFH…LTMDVLKLLY (259 aa)) is the ATP-grasp domain. ATP is bound at residue 520–578 (LRYANKAFVVKPKSTNYGLGITIFKEGASLEDFTEALRIAFKEDTAVLIEEFLPGTEYR). Residues Asp-700, Glu-721, and Asn-723 each coordinate Mg(2+). Residues Asp-700, Glu-721, and Asn-723 each contribute to the Mn(2+) site.

This sequence in the N-terminal section; belongs to the glutamate--cysteine ligase type 1 family. Type 2 subfamily. Monomer. It depends on Mg(2+) as a cofactor. Mn(2+) is required as a cofactor.

It catalyses the reaction L-cysteine + L-glutamate + ATP = gamma-L-glutamyl-L-cysteine + ADP + phosphate + H(+). The enzyme catalyses gamma-L-glutamyl-L-cysteine + glycine + ATP = glutathione + ADP + phosphate + H(+). It participates in sulfur metabolism; glutathione biosynthesis; glutathione from L-cysteine and L-glutamate: step 1/2. It functions in the pathway sulfur metabolism; glutathione biosynthesis; glutathione from L-cysteine and L-glutamate: step 2/2. Its function is as follows. Synthesizes glutathione from L-glutamate and L-cysteine via gamma-L-glutamyl-L-cysteine. The sequence is that of Glutathione biosynthesis bifunctional protein GshAB from Enterococcus faecalis (strain ATCC 700802 / V583).